The sequence spans 104 residues: Large ribosomal subunit protein bL21 (104 aa).

Belongs to the bacterial ribosomal protein bL21 family. As to quaternary structure, part of the 50S ribosomal subunit. Contacts protein L20.

Its function is as follows. This protein binds to 23S rRNA in the presence of protein L20. This Helicobacter pylori (strain P12) protein is Large ribosomal subunit protein bL21.